The sequence spans 215 residues: Peptide methionine sulfoxide reductase MsrA (215 aa).

Cys-57 is an active-site residue.

The protein belongs to the MsrA Met sulfoxide reductase family.

It catalyses the reaction L-methionyl-[protein] + [thioredoxin]-disulfide + H2O = L-methionyl-(S)-S-oxide-[protein] + [thioredoxin]-dithiol. It carries out the reaction [thioredoxin]-disulfide + L-methionine + H2O = L-methionine (S)-S-oxide + [thioredoxin]-dithiol. Functionally, has an important function as a repair enzyme for proteins that have been inactivated by oxidation. Catalyzes the reversible oxidation-reduction of methionine sulfoxide in proteins to methionine. The sequence is that of Peptide methionine sulfoxide reductase MsrA from Saccharophagus degradans (strain 2-40 / ATCC 43961 / DSM 17024).